We begin with the raw amino-acid sequence, 313 residues long: Glyoxylate/hydroxypyruvate reductase A HPR2 (313 aa).

NADP(+) contacts are provided by residues 152–155, 174–176, 230–232, and aspartate 256; these read LGRI, SRT, and IGR. Arginine 232 is an active-site residue. Residue glutamate 261 is part of the active site. The active-site Proton donor is the histidine 279. NADP(+) is bound at residue 279 to 281; it reads HVG.

It belongs to the D-isomer specific 2-hydroxyacid dehydrogenase family. GyaR subfamily. In terms of assembly, homodimer.

It localises to the cytoplasm. The enzyme catalyses glycolate + NADP(+) = glyoxylate + NADPH + H(+). It catalyses the reaction (R)-glycerate + NAD(+) = 3-hydroxypyruvate + NADH + H(+). The catalysed reaction is (R)-glycerate + NADP(+) = 3-hydroxypyruvate + NADPH + H(+). Strongly inhibited by oxalate. Functionally, catalyzes the NADPH-dependent reduction of glyoxylate and hydroxypyruvate (HP) into glycolate and glycerate in the cytoplasm, thus providing a cytosolic bypass to the photorespiratory core cycle. Mostly active in the presence of NADPH and hydroxypyruvate. The sequence is that of Glyoxylate/hydroxypyruvate reductase A HPR2 (HPR2) from Arabidopsis thaliana (Mouse-ear cress).